The sequence spans 77 residues: Conotoxin VnMEKL-0111 (77 aa).

The signal sequence occupies residues 1–19 (MEKLTILLLVAAVLMSTQA). Positions 20-46 (LIQHDGEKSQKAKMKFLTARTLSAKTR) are excised as a propeptide. Cystine bridges form between cysteine 50–cysteine 66, cysteine 57–cysteine 71, and cysteine 65–cysteine 75.

This sequence belongs to the conotoxin O2 superfamily. Expressed by the venom duct.

It is found in the secreted. The protein is Conotoxin VnMEKL-0111 of Conus ventricosus (Mediterranean cone).